We begin with the raw amino-acid sequence, 931 residues long: Bifunctional uridylyltransferase/uridylyl-removing enzyme (931 aa).

The segment at Met-1–Pro-383 is uridylyltransferase. Positions Glu-384–Thr-739 are uridylyl-removing. The HD domain occupies Val-499 to Leu-622. ACT domains are found at residues Glu-740–Arg-822 and Val-851–Gly-931.

The protein belongs to the GlnD family. The cofactor is Mg(2+).

The catalysed reaction is [protein-PII]-L-tyrosine + UTP = [protein-PII]-uridylyl-L-tyrosine + diphosphate. It catalyses the reaction [protein-PII]-uridylyl-L-tyrosine + H2O = [protein-PII]-L-tyrosine + UMP + H(+). Uridylyltransferase (UTase) activity is inhibited by glutamine, while glutamine activates uridylyl-removing (UR) activity. Modifies, by uridylylation and deuridylylation, the PII regulatory proteins (GlnB and homologs), in response to the nitrogen status of the cell that GlnD senses through the glutamine level. Under low glutamine levels, catalyzes the conversion of the PII proteins and UTP to PII-UMP and PPi, while under higher glutamine levels, GlnD hydrolyzes PII-UMP to PII and UMP (deuridylylation). Thus, controls uridylylation state and activity of the PII proteins, and plays an important role in the regulation of nitrogen assimilation and metabolism. In Nitrobacter hamburgensis (strain DSM 10229 / NCIMB 13809 / X14), this protein is Bifunctional uridylyltransferase/uridylyl-removing enzyme.